The primary structure comprises 255 residues: Cytosolic Fe-S cluster assembly factor Nubp2 homolog (255 aa).

14–21 contacts ATP; that stretch reads GKGGVGKS. Residues cysteine 185 and cysteine 188 each coordinate [4Fe-4S] cluster.

Belongs to the Mrp/NBP35 ATP-binding proteins family. NUBP2/CFD1 subfamily. Heterotetramer of 2 Nubp1 and 2 Nubp2 chains. The cofactor is [4Fe-4S] cluster.

It is found in the cytoplasm. In terms of biological role, component of the cytosolic iron-sulfur (Fe/S) protein assembly (CIA) machinery. Required for maturation of extramitochondrial Fe-S proteins. The Nubp1-Nubp2 heterotetramer forms a Fe-S scaffold complex, mediating the de novo assembly of an Fe-S cluster and its transfer to target apoproteins. This is Cytosolic Fe-S cluster assembly factor Nubp2 homolog from Drosophila persimilis (Fruit fly).